The chain runs to 216 residues: Large ribosomal subunit protein uL24m (216 aa).

Residues 1–9 (MRLSALLAL) constitute a mitochondrion transit peptide. Residue S24 is modified to Phosphoserine. In terms of domain architecture, KOW spans 56–89 (LFCGDMVEILEGKDAGKQGKVVQVVRQRNWVVLE).

It belongs to the universal ribosomal protein uL24 family. In terms of assembly, component of the mitochondrial ribosome large subunit (39S) which comprises a 16S rRNA and about 50 distinct proteins.

It localises to the mitochondrion. The protein is Large ribosomal subunit protein uL24m (Mrpl24) of Mus musculus (Mouse).